We begin with the raw amino-acid sequence, 290 residues long: MKDYTLIALAYNQEIRIYTSVSTNLVEKSRKLHKTLPTASAAMGRFLTASAMMSLMYKDGERLTLKIDGDGPIGQMTVEAKNGVVRSTILNPNVYLVYGEGPKMGKLNVGAAVGAGTLSVTKDWKENYFTSSSPLQTGEIGDDFTYYYATSEQTPSAVGLGVLVSRGKKVIQAGGFIIQVLPHASEKTLNQLESIISKINSVTDLLKSNHTPEDMINILSDNTGEILEKHELKYHCGCSRKKYFDALSRLNKQALEDILHEDGQAEVVCQYCNKKYIYTSEDLTKMIASK.

2 disulfide bridges follow: C236-C238 and C269-C272.

It belongs to the HSP33 family. In terms of processing, under oxidizing conditions two disulfide bonds are formed involving the reactive cysteines. Under reducing conditions zinc is bound to the reactive cysteines and the protein is inactive.

Its subcellular location is the cytoplasm. Its function is as follows. Redox regulated molecular chaperone. Protects both thermally unfolding and oxidatively damaged proteins from irreversible aggregation. Plays an important role in the bacterial defense system toward oxidative stress. This Acholeplasma laidlawii (strain PG-8A) protein is 33 kDa chaperonin.